Consider the following 657-residue polypeptide: MTQLAIGKPAPLGAHYDGQGVNFTLFSAHAERVELCVFDANGHEHRYDLPGHSGDIWHGYLPDARPGLRYGYRVHGPWQPAEGHRFNPAKLLIDPCARQIDGEFKDNPLLYAGHNEPDYRDNAAIAPKCVVVVDHYDWEDDAPPRTPWGSTIIYEAHVKGLTYLHPEIPVEIRGTYKALGHPVMINYLKQLGITALELLPVAQFASEPRLQRMGLSNYWGYNPVAMFALHPAYACSPETALHEFRDAIKALHKAGIEVILDIVLNHSAELDLDGPLFSLRGIDNRSYYWIREDGDYHNWTGCGNTLNLSHPAVVDYASACLRYWVETCHVDGFRFDLAAVMGRTPEFRQDAPLFTAIQNCPVLSQVKLIAEPWDIAPGGYQVGNFPPLFAEWNDHFRDAARRFWLHYDLPLGAFAGRFAASSDVFKRNGRLPSAAINLVTAHDGFTLRDCVCFNHKHNEANGEENRDGTNNNYSNNHGKEGLGGTLDLVERRRDSIHALLTTLLLSQGTPMLLAGDEHGHSQHGNNNAYCQDNQLTWLDWSQASSGLTAFTAALIHLRKRIPALVENRWWEEGDGNVRWLNRYAQPLSTDEWQNGPKQLQILLSDRFLIAINATLEVTEIVLPAGEWHAIPPFAGEDNPVITAVWQGPAHGLCVFQR.

Residue Asp336 is the Nucleophile of the active site. The active-site Proton donor is the Glu371. The disordered stretch occupies residues 460–479 (ANGEENRDGTNNNYSNNHGK).

Belongs to the glycosyl hydrolase 13 family.

It carries out the reaction Hydrolysis of (1-&gt;6)-alpha-D-glucosidic linkages to branches with degrees of polymerization of three or four glucose residues in limit dextrin.. It functions in the pathway glycan degradation; glycogen degradation. In terms of biological role, removes maltotriose and maltotetraose chains that are attached by 1,6-alpha-linkage to the limit dextrin main chain, generating a debranched limit dextrin. In Shigella dysenteriae serotype 1 (strain Sd197), this protein is Glycogen debranching enzyme.